A 474-amino-acid polypeptide reads, in one-letter code: Tumor necrosis factor receptor superfamily member 1B (474 aa).

The signal sequence occupies residues 1 to 22 (MAPAALWVALVVELQLWATGHT). Over 23-258 (VPAKVVLTPY…PIIEPSITGG (236 aa)) the chain is Extracellular. O-linked (GalNAc...) threonine glycosylation occurs at T30. TNFR-Cys repeat units lie at residues 39 to 77 (QCQI…TVCA), 78 to 119 (DCAA…NRVC), 120 to 164 (ACNA…VICS), and 165 to 203 (ACAP…AVCA). Cystine bridges form between C40–C54, C55–C68, C58–C76, C79–C94, C97–C111, C101–C119, C121–C127, C136–C145, C139–C163, and C166–C181. N69 carries N-linked (GlcNAc...) asparagine glycosylation. N110 carries N-linked (GlcNAc...) asparagine glycosylation. N195 carries N-linked (GlcNAc...) asparagine glycosylation. O-linked (GalNAc...) threonine glycosylation is found at T208 and T224. Polar residues predominate over residues 220 to 239 (QPEPTRSQPMDQEPGPSQTP). Positions 220-241 (QPEPTRSQPMDQEPGPSQTPHI) are disordered. Residues 259–288 (ISLPIGLIVGLTTLGLLMLGLANCFILVQR) traverse the membrane as a helical segment. Residues 289-474 (KKKPSCLQRE…WYDQIAVKVP (186 aa)) are Cytoplasmic-facing. Disordered stretches follow at residues 321 to 378 (LTTA…GSHG) and 397 to 464 (SQCS…NQPG). Composition is skewed to low complexity over residues 324–338 (APSS…SASA) and 366–378 (GSRS…GSHG). Phosphoserine is present on S331. Polar residues predominate over residues 429-442 (ECPSQSQWETTETL).

As to quaternary structure, binds to TRAF2. Interacts with BMX. Interacts (activated form) with XPNPEP3.

The protein localises to the membrane. In terms of biological role, receptor with high affinity for TNFSF2/TNF-alpha and approximately 5-fold lower affinity for homotrimeric TNFSF1/lymphotoxin-alpha. The TRAF1/TRAF2 complex recruits the apoptotic suppressors BIRC2 and BIRC3 to TNFRSF1B/TNFR2. This is Tumor necrosis factor receptor superfamily member 1B (Tnfrsf1b) from Rattus norvegicus (Rat).